Reading from the N-terminus, the 240-residue chain is FAS1 domain-containing protein AN1527 (240 aa).

Residues 1–24 form the signal peptide; sequence MRQLSTTALVLFLFFYCSISTAWS. The 149-residue stretch at 91 to 239 folds into the FAS1 domain; sequence EPTISDVLPK…GEVWVIDGVI (149 aa).

Its subcellular location is the vacuole. The protein is FAS1 domain-containing protein AN1527 of Emericella nidulans (strain FGSC A4 / ATCC 38163 / CBS 112.46 / NRRL 194 / M139) (Aspergillus nidulans).